The sequence spans 518 residues: MEGFSCSLQPPTASEREDCNRDEPPRKIITEKNTLRQTKLANGTSSMIVPKQRKLSANYEKEKELCVKYFEQWSECDQVEFVEHLISRMCHYQHGHINTYLKPMLQRDFITALPARGLDHIAENILSYLDAKSLCSAELVCKEWYRVTSDGMLWKKLIERMVRTDSLWRGLAERRGWGQYLFKNKPPDGKTPPNSFYRALYPKIIQDIETIESNWRCGRHSLQRIHCRSETSKGVYCLQYDDQKIVSGLRDNTIKIWDKNTLECKRVLMGHTGSVLCLQYDERVIITGSSDSTVRVWDVNTGEMLNTLIHHCEAVLHLRFNNGMMVTCSKDRSIAVWDMASATDITLRRVLVGHRAAVNVVDFDDKYIVSASGDRTIKVWNTSTCEFVRTLNGHKRGIACLQYRDRLVVSGSSDNTIRLWDIECGACLRVLEGHEELVRCIRFDNKRIVSGAYDGKIKVWDLVAALDPRAPAGTLCLRTLVEHSGRVFRLQFDEFQIVSSSHDDTILIWDFLNDPGLA.

Residues 1-12 (MEGFSCSLQPPT) show a composition bias toward polar residues. The segment at 1 to 24 (MEGFSCSLQPPTASEREDCNRDEP) is disordered. Basic and acidic residues predominate over residues 14–24 (SEREDCNRDEP). One can recognise an F-box domain in the interval 119–157 (DHIAENILSYLDAKSLCSAELVCKEWYRVTSDGMLWKKL). WD repeat units lie at residues 230–258 (ETSKGVYCLQYDDQKIVSGLRDNTIKIWD), 270–298 (GHTGSVLCLQYDERVIITGSSDSTVRVWD), 310–338 (HHCEAVLHLRFNNGMMVTCSKDRSIAVWD), 353–381 (GHRAAVNVVDFDDKYIVSASGDRTIKVWN), 393–421 (GHKRGIACLQYRDRLVVSGSSDNTIRLWD), 433–461 (GHEELVRCIRFDNKRIVSGAYDGKIKVWD), and 482–510 (EHSGRVFRLQFDEFQIVSSSHDDTILIWD).

As to quaternary structure, part of a SCF (SKP1-cullin-F-box) ubiquitin-protein ligase complex. Interacts with fbxo5.

In terms of biological role, substrate recognition component of a SCF (SKP1-CUL1-F-box protein) E3 ubiquitin-protein ligase complex which mediates the ubiquitination and subsequent proteasomal degradation of target proteins. Probably recognizes and binds to phosphorylated target proteins. May participate in Wnt signaling. The protein is Beta-TrCP (fbxw1) of Xenopus laevis (African clawed frog).